The sequence spans 341 residues: S-adenosylmethionine:tRNA ribosyltransferase-isomerase (341 aa).

The protein belongs to the QueA family. In terms of assembly, monomer.

The protein resides in the cytoplasm. The catalysed reaction is 7-aminomethyl-7-carbaguanosine(34) in tRNA + S-adenosyl-L-methionine = epoxyqueuosine(34) in tRNA + adenine + L-methionine + 2 H(+). The protein operates within tRNA modification; tRNA-queuosine biosynthesis. In terms of biological role, transfers and isomerizes the ribose moiety from AdoMet to the 7-aminomethyl group of 7-deazaguanine (preQ1-tRNA) to give epoxyqueuosine (oQ-tRNA). The protein is S-adenosylmethionine:tRNA ribosyltransferase-isomerase of Chlorobium chlorochromatii (strain CaD3).